The sequence spans 708 residues: Retrotransposon-derived protein PEG10 (708 aa).

A coiled-coil region spans residues 1–50 (MTERRRDELSEEINNLREKVMKQSEENNNLQSQVQKLTEENTTLREQVEP). The interval 21–74 (MKQSEENNNLQSQVQKLTEENTTLREQVEPTPEDEDDDIELRGAAAAAAPPPPI) is disordered. Residues 26 to 36 (ENNNLQSQVQK) are compositionally biased toward polar residues. The span at 37–48 (LTEENTTLREQV) shows a compositional bias: basic and acidic residues. The necessary for interaction with ACVRL1 stretch occupies residues 76-275 (EECPEDLPEK…HQVDPTEPVG (200 aa)). Residues 293 to 310 (NLCLYCGTGGHYADNCPA) form a CCHC-type zinc finger. The tract at residues 310–344 (AKASKSSPAGKLPGPAVEGPSATGPEIIRSPQDDA) is disordered. Glycyl lysine isopeptide (Lys-Gly) (interchain with G-Cter in ubiquitin) cross-links involve residues lysine 311 and lysine 314. Serine 316 and leucine 321 each carry phosphoserine. Omega-N-methylarginine is present on residues arginine 507, arginine 598, and arginine 611. Residues 683 to 708 (PVPQYPPPQPPPPPPPPPPPPSYSTL) form a disordered region.

In terms of assembly, homooligomer; homooligomerizes into virion-like capsids. Interacts with ACVRL1. Interacts with SIAH1 and SIAH2. In terms of processing, undergoes proteolytic cleavage. As to expression, expressed in the cytotrophoblast layer but not in the overlying syncytiotrophoblast of the placenta. Expressed in prostate and breast carcinomas but not in normal breast and prostate epithelial cells. Expressed in the Hep-G2 cell line (at protein level). Expressed in brain, liver, spleen, kidney, thymus, lung, ovary, testis, reactive lymph node, skeletal muscle, adipose tissue and placenta. Expressed in pancreatic and hepatocellular carcinomas (HCC).

The protein localises to the extracellular vesicle membrane. It localises to the cytoplasm. The protein resides in the nucleus. In terms of biological role, retrotransposon-derived protein that binds its own mRNA and self-assembles into virion-like capsids. Forms virion-like extracellular vesicles that encapsulate their own mRNA and are released from cells, enabling intercellular transfer of PEG10 mRNA. Binds its own mRNA in the 5'-UTR region, in the region near the boundary between the nucleocapsid (NC) and protease (PRO) coding sequences and in the beginning of the 3'-UTR region. Involved in placenta formation: required for trophoblast stem cells differentiation. Involved at the immediate early stage of adipocyte differentiation. Overexpressed in many cancers and enhances tumor progression: promotes cell proliferation by driving cell cycle progression from G0/G1. Enhances cancer progression by inhibiting the TGF-beta signaling, possibly via interaction with the TGF-beta receptor ACVRL1. May bind to the 5'-GCCTGTCTTT-3' DNA sequence of the MB1 domain in the myelin basic protein (MBP) promoter; additional evidences are however required to confirm this result. The polypeptide is Retrotransposon-derived protein PEG10 (Homo sapiens (Human)).